Here is a 187-residue protein sequence, read N- to C-terminus: Protein canopy-1 (187 aa).

An N-terminal signal peptide occupies residues 1 to 24; it reads MSPWIKHICLVLVAAFMLVKTTES. The Saposin B-type domain maps to 28–181; sequence EALYCSACMA…EVSDHCKSSV (154 aa). 3 cysteine pairs are disulfide-bonded: Cys-32–Cys-177, Cys-35–Cys-170, and Cys-90–Cys-143. The Prevents secretion from ER motif lies at 184-187; that stretch reads HSEL.

Belongs to the canopy family. As to quaternary structure, homodimer. Interacts with fgfr1.

The protein resides in the endoplasmic reticulum. Involved in the maintenance of the midbrain-hindbrain boundary (MHB) organizer. Contributes to a positive-feedback loop of FGF signaling in the MHB, enabling the MHB to exert its role as an organizer for the tectal and cerebellar development. This is Protein canopy-1 (cnpy1) from Danio rerio (Zebrafish).